We begin with the raw amino-acid sequence, 340 residues long: Ketol-acid reductoisomerase (NADP(+)) (340 aa).

The KARI N-terminal Rossmann domain maps to 2–182 (ANIYYENHAD…GCTRAGVIET (181 aa)). NADP(+) contacts are provided by residues 25 to 28 (FGSQ), S51, S53, and 83 to 86 (DTAQ). Residue H108 is part of the active site. G134 provides a ligand contact to NADP(+). The region spanning 183–328 (TFAEETETDL…RELRRMMPFV (146 aa)) is the KARI C-terminal knotted domain. Residues D191, E195, E227, and E231 each contribute to the Mg(2+) site. A substrate-binding site is contributed by S252.

The protein belongs to the ketol-acid reductoisomerase family. Requires Mg(2+) as cofactor.

It catalyses the reaction (2R)-2,3-dihydroxy-3-methylbutanoate + NADP(+) = (2S)-2-acetolactate + NADPH + H(+). It carries out the reaction (2R,3R)-2,3-dihydroxy-3-methylpentanoate + NADP(+) = (S)-2-ethyl-2-hydroxy-3-oxobutanoate + NADPH + H(+). It participates in amino-acid biosynthesis; L-isoleucine biosynthesis; L-isoleucine from 2-oxobutanoate: step 2/4. It functions in the pathway amino-acid biosynthesis; L-valine biosynthesis; L-valine from pyruvate: step 2/4. Involved in the biosynthesis of branched-chain amino acids (BCAA). Catalyzes an alkyl-migration followed by a ketol-acid reduction of (S)-2-acetolactate (S2AL) to yield (R)-2,3-dihydroxy-isovalerate. In the isomerase reaction, S2AL is rearranged via a Mg-dependent methyl migration to produce 3-hydroxy-3-methyl-2-ketobutyrate (HMKB). In the reductase reaction, this 2-ketoacid undergoes a metal-dependent reduction by NADPH to yield (R)-2,3-dihydroxy-isovalerate. The sequence is that of Ketol-acid reductoisomerase (NADP(+)) from Roseiflexus castenholzii (strain DSM 13941 / HLO8).